A 429-amino-acid polypeptide reads, in one-letter code: MTRSDELFEQAKKTIPGGVNSPVRAFNGVGGSPRFIEKADGAYIFDADGKKYIDYVGSWGPMILGHNHPKIRAAVLEAVENGLSFGAPTELEVTMAEKVIEMVPSMEQVRMVSSGTEATMSAIRLARGFTSRDKILKFEGCYHGHADCLLVKAGSGALTLGQPSSPGIPEDFAKHTLTATYNDLDSVKALFEQYPDAISCIILEPVAGNMNCIPPVEGFLEGLRAICDQYGALMIIDEVMTGFRVSKSGAQGHYGVTPDLTTLGKVIGGGMPVGAFGGRKDVMQFIAPTGPVYQAGTLSGNPIAMSAGLAQMEALCEDGVYEQLAAKTQYIAEGFKAAANKHGIPMAINYVGGMFGFFFTDEEKVTSFEQVTKCDAEKFPEFYHGMLDEGVYLAPSAYEAGFLSLAHGEAELEATLAAAERVFAKMAKG.

Lysine 265 carries the post-translational modification N6-(pyridoxal phosphate)lysine.

The protein belongs to the class-III pyridoxal-phosphate-dependent aminotransferase family. HemL subfamily. In terms of assembly, homodimer. The cofactor is pyridoxal 5'-phosphate.

It localises to the cytoplasm. The catalysed reaction is (S)-4-amino-5-oxopentanoate = 5-aminolevulinate. Its pathway is porphyrin-containing compound metabolism; protoporphyrin-IX biosynthesis; 5-aminolevulinate from L-glutamyl-tRNA(Glu): step 2/2. The protein is Glutamate-1-semialdehyde 2,1-aminomutase of Shewanella piezotolerans (strain WP3 / JCM 13877).